Consider the following 309-residue polypeptide: Ribonuclease Z (309 aa).

Histidine 63, histidine 65, aspartate 67, histidine 68, histidine 145, aspartate 216, and histidine 274 together coordinate Zn(2+). Catalysis depends on aspartate 67, which acts as the Proton acceptor.

Belongs to the RNase Z family. Homodimer. It depends on Zn(2+) as a cofactor.

The enzyme catalyses Endonucleolytic cleavage of RNA, removing extra 3' nucleotides from tRNA precursor, generating 3' termini of tRNAs. A 3'-hydroxy group is left at the tRNA terminus and a 5'-phosphoryl group is left at the trailer molecule.. Zinc phosphodiesterase, which displays some tRNA 3'-processing endonuclease activity. Probably involved in tRNA maturation, by removing a 3'-trailer from precursor tRNA. In Streptococcus sanguinis (strain SK36), this protein is Ribonuclease Z.